A 280-amino-acid polypeptide reads, in one-letter code: MLIINDNNLSGLSLQRVNGTGELSVQFKDGRSRISRLYQEGAAKIRMPQAVTGPLEAILINTSGGLTGGDRLKWDVALDDGASAVITTQACERIYRSGGGEARIATRLKAAKGTRLAWLPQETILFNRSILSRRLDVELEEGAQMLVVEATVFGRLAMGERVVAARFADRWRVRLGGRVIHAEEFRLGPDVGAELQATAVAGGACAMATVLMVCEQAGRHLETARAIIGEEGGCSLWRVGKASKLVVRLYAPDSYALRRRLCPLVALLNGKAGLPKVWTI.

Belongs to the UreD family. In terms of assembly, ureD, UreF and UreG form a complex that acts as a GTP-hydrolysis-dependent molecular chaperone, activating the urease apoprotein by helping to assemble the nickel containing metallocenter of UreC. The UreE protein probably delivers the nickel.

It is found in the cytoplasm. Required for maturation of urease via the functional incorporation of the urease nickel metallocenter. This is Urease accessory protein UreD 1 from Brucella melitensis biotype 1 (strain ATCC 23456 / CCUG 17765 / NCTC 10094 / 16M).